Here is a 400-residue protein sequence, read N- to C-terminus: Elongation factor Tu 2 (400 aa).

A tr-type G domain is found at 10–209 (KPHLNIGTIG…AVDSYIPLPQ (200 aa)). Residues 19–26 (GHIDHGKT) form a G1 region. GTP is bound at residue 19 to 26 (GHIDHGKT). Residue Thr26 coordinates Mg(2+). Residues 60-64 (GITIN) are G2. A G3 region spans residues 81-84 (DCPG). Residues 81–85 (DCPGH) and 136–139 (NKID) contribute to the GTP site. Residues 136–139 (NKID) form a G4 region. A G5 region spans residues 174–176 (SAL).

It belongs to the TRAFAC class translation factor GTPase superfamily. Classic translation factor GTPase family. EF-Tu/EF-1A subfamily. In terms of assembly, monomer.

It localises to the cytoplasm. The catalysed reaction is GTP + H2O = GDP + phosphate + H(+). Its function is as follows. GTP hydrolase that promotes the GTP-dependent binding of aminoacyl-tRNA to the A-site of ribosomes during protein biosynthesis. This chain is Elongation factor Tu 2, found in Syntrophomonas wolfei subsp. wolfei (strain DSM 2245B / Goettingen).